We begin with the raw amino-acid sequence, 318 residues long: Ankyrin repeat domain-containing protein 1 (318 aa).

Residues 37–77 (ALEKQEDLKTTSKSLIELEEEKQSKEKQLKSELLKKKLEER) adopt a coiled-coil conformation. ANK repeat units lie at residues 151–180 (YKRT…NIEF), 184–213 (LEST…AINA), 217–246 (LLST…DLNA), 250–279 (EGDT…NLNI), and 283–314 (AGKT…KNSH).

Its subcellular location is the nucleus. Its function is as follows. May act as a nuclear transcription factor that negatively regulates the expression of cardiac genes. This Xenopus laevis (African clawed frog) protein is Ankyrin repeat domain-containing protein 1 (ankrd1).